We begin with the raw amino-acid sequence, 82 residues long: Chlorosome protein E (82 aa).

Position 26 (H26) interacts with a bacteriochlorophyll c. Residues 55-82 are disordered; it reads GSSGLKGSSPKYSGYATPSKEVKSRFEK. Residues 59–69 are compositionally biased toward low complexity; sequence LKGSSPKYSGY.

The protein belongs to the BChl C/E-binding protein family.

It is found in the chlorosome. The protein localises to the chlorosome envelope. In terms of biological role, component of the photosynthetic apparatus. The light harvesting B740 complex binds bacteriochlorophyll c. The protein is Chlorosome protein E (csmE) of Chlorobaculum tepidum (strain ATCC 49652 / DSM 12025 / NBRC 103806 / TLS) (Chlorobium tepidum).